A 729-amino-acid chain; its full sequence is Fatty acid oxidation complex subunit alpha (729 aa).

The interval methionine 1–lysine 189 is enoyl-CoA hydratase/isomerase. Aspartate 296 is a substrate binding site. Residues glutamate 311–alanine 729 are 3-hydroxyacyl-CoA dehydrogenase. Residues methionine 324, aspartate 343, valine 400–glutamate 402, lysine 407, and serine 429 contribute to the NAD(+) site. Histidine 450 (for 3-hydroxyacyl-CoA dehydrogenase activity) is an active-site residue. Asparagine 453 provides a ligand contact to NAD(+). 2 residues coordinate substrate: asparagine 500 and tyrosine 660.

The protein in the N-terminal section; belongs to the enoyl-CoA hydratase/isomerase family. It in the C-terminal section; belongs to the 3-hydroxyacyl-CoA dehydrogenase family. As to quaternary structure, heterotetramer of two alpha chains (FadB) and two beta chains (FadA).

It carries out the reaction a (3S)-3-hydroxyacyl-CoA + NAD(+) = a 3-oxoacyl-CoA + NADH + H(+). It catalyses the reaction a (3S)-3-hydroxyacyl-CoA = a (2E)-enoyl-CoA + H2O. The catalysed reaction is a 4-saturated-(3S)-3-hydroxyacyl-CoA = a (3E)-enoyl-CoA + H2O. The enzyme catalyses (3S)-3-hydroxybutanoyl-CoA = (3R)-3-hydroxybutanoyl-CoA. It carries out the reaction a (3Z)-enoyl-CoA = a 4-saturated (2E)-enoyl-CoA. It catalyses the reaction a (3E)-enoyl-CoA = a 4-saturated (2E)-enoyl-CoA. The protein operates within lipid metabolism; fatty acid beta-oxidation. Involved in the aerobic and anaerobic degradation of long-chain fatty acids via beta-oxidation cycle. Catalyzes the formation of 3-oxoacyl-CoA from enoyl-CoA via L-3-hydroxyacyl-CoA. It can also use D-3-hydroxyacyl-CoA and cis-3-enoyl-CoA as substrate. The chain is Fatty acid oxidation complex subunit alpha from Escherichia coli (strain SE11).